Consider the following 273-residue polypeptide: Large ribosomal subunit protein uL2 (273 aa).

The disordered stretch occupies residues 228–273; it reads VDHPHGGGEGKTSGGRHPVTPWGFPTKGKKTRKNKRTSKFIVKKRK. The span at 254–273 shows a compositional bias: basic residues; it reads KGKKTRKNKRTSKFIVKKRK.

It belongs to the universal ribosomal protein uL2 family. In terms of assembly, part of the 50S ribosomal subunit. Forms a bridge to the 30S subunit in the 70S ribosome.

In terms of biological role, one of the primary rRNA binding proteins. Required for association of the 30S and 50S subunits to form the 70S ribosome, for tRNA binding and peptide bond formation. It has been suggested to have peptidyltransferase activity; this is somewhat controversial. Makes several contacts with the 16S rRNA in the 70S ribosome. This is Large ribosomal subunit protein uL2 from Rickettsia canadensis (strain McKiel).